A 309-amino-acid polypeptide reads, in one-letter code: Homoserine O-succinyltransferase (309 aa).

The active-site Acyl-thioester intermediate is Cys-142. Substrate contacts are provided by Lys-163 and Ser-192. His-235 (proton acceptor) is an active-site residue. Residue Glu-237 is part of the active site. Residue Arg-249 participates in substrate binding.

The protein belongs to the MetA family. As to quaternary structure, homodimer.

Its subcellular location is the cytoplasm. It catalyses the reaction L-homoserine + succinyl-CoA = O-succinyl-L-homoserine + CoA. The protein operates within amino-acid biosynthesis; L-methionine biosynthesis via de novo pathway; O-succinyl-L-homoserine from L-homoserine: step 1/1. Transfers a succinyl group from succinyl-CoA to L-homoserine, forming succinyl-L-homoserine. The chain is Homoserine O-succinyltransferase from Escherichia coli (strain SE11).